Consider the following 506-residue polypeptide: Maturase K (506 aa).

Belongs to the intron maturase 2 family. MatK subfamily.

It is found in the plastid. It localises to the chloroplast. In terms of biological role, usually encoded in the trnK tRNA gene intron. Probably assists in splicing its own and other chloroplast group II introns. This chain is Maturase K, found in Prunus persica (Peach).